The following is a 442-amino-acid chain: Probable glycine dehydrogenase (decarboxylating) subunit 1 (442 aa).

Belongs to the GcvP family. N-terminal subunit subfamily. The glycine cleavage system is composed of four proteins: P, T, L and H. In this organism, the P 'protein' is a heterodimer of two subunits.

It catalyses the reaction N(6)-[(R)-lipoyl]-L-lysyl-[glycine-cleavage complex H protein] + glycine + H(+) = N(6)-[(R)-S(8)-aminomethyldihydrolipoyl]-L-lysyl-[glycine-cleavage complex H protein] + CO2. In terms of biological role, the glycine cleavage system catalyzes the degradation of glycine. The P protein binds the alpha-amino group of glycine through its pyridoxal phosphate cofactor; CO(2) is released and the remaining methylamine moiety is then transferred to the lipoamide cofactor of the H protein. The protein is Probable glycine dehydrogenase (decarboxylating) subunit 1 of Phenylobacterium zucineum (strain HLK1).